The chain runs to 456 residues: tRNA modification GTPase MnmE (456 aa).

R25, E87, and R126 together coordinate (6S)-5-formyl-5,6,7,8-tetrahydrofolate. The 157-residue stretch at 221-377 (GLKVAIVGQP…LENAIIEQVN (157 aa)) folds into the TrmE-type G domain. Residue N231 participates in K(+) binding. GTP contacts are provided by residues 231 to 236 (NVGKSS), 250 to 256 (TDLPGTT), and 275 to 278 (DTAG). S235 serves as a coordination point for Mg(2+). T250, L252, and T255 together coordinate K(+). T256 lines the Mg(2+) pocket. K456 lines the (6S)-5-formyl-5,6,7,8-tetrahydrofolate pocket.

It belongs to the TRAFAC class TrmE-Era-EngA-EngB-Septin-like GTPase superfamily. TrmE GTPase family. Homodimer. Heterotetramer of two MnmE and two MnmG subunits. Requires K(+) as cofactor.

The protein resides in the cytoplasm. Exhibits a very high intrinsic GTPase hydrolysis rate. Involved in the addition of a carboxymethylaminomethyl (cmnm) group at the wobble position (U34) of certain tRNAs, forming tRNA-cmnm(5)s(2)U34. The chain is tRNA modification GTPase MnmE from Synechocystis sp. (strain ATCC 27184 / PCC 6803 / Kazusa).